The following is a 121-amino-acid chain: Auxin-responsive protein SAUR32 (121 aa).

This sequence belongs to the ARG7 family. Expressed in roots, leaves and stems.

Its subcellular location is the nucleus. The protein resides in the cytoplasm. In terms of biological role, may play a role in the apical hook development. The protein is Auxin-responsive protein SAUR32 of Arabidopsis thaliana (Mouse-ear cress).